The following is a 129-amino-acid chain: Iron-sulfur cluster assembly 1 homolog, mitochondrial (129 aa).

The transit peptide at 1-12 (MSASLVRATVRA) directs the protein to the mitochondrion. 3 residues coordinate Fe cation: Cys-57, Cys-121, and Cys-123.

Belongs to the HesB/IscA family. Interacts with CRY2, but not with CRY1 (in vitro).

The protein resides in the mitochondrion. Involved in the maturation of mitochondrial 4Fe-4S proteins functioning late in the iron-sulfur cluster assembly pathway. Probably involved in the binding of an intermediate of Fe/S cluster assembly. The chain is Iron-sulfur cluster assembly 1 homolog, mitochondrial (Isca1) from Rattus norvegicus (Rat).